The sequence spans 226 residues: Elongation factor 1-delta (226 aa).

The segment at Ser-82–Lys-131 is disordered. The segment covering Ala-97–Glu-113 has biased composition (acidic residues). The span at Glu-114–Ala-124 shows a compositional bias: basic and acidic residues.

This sequence belongs to the EF-1-beta/EF-1-delta family. In terms of assembly, EF-1 is composed of 4 subunits: alpha, beta (1B-alpha=beta'), delta (1B-beta), and gamma (1B-gamma).

In terms of biological role, EF-1-beta and EF-1-beta' stimulate the exchange of GDP bound to EF-1-alpha to GTP. The polypeptide is Elongation factor 1-delta (Spuriopimpinella brachycarpa (Chamnamul)).